A 905-amino-acid chain; its full sequence is MTNPSPKLTPMFEQYLRIKEDYPDALLFYRMGDFYELFFDDAETTARELQIALTCRNPNAELKAPMCGVPYHAVEGYISQLLDKGYRVAICEQIEDPKEAKGLVKRAVTRVLTPGTVIDDANLDAKEHNYLGALFWNQDAEAGAFAWVDVSTGEWSGLYSRKLAELWQWAQKMAPRELLLPEGVDTPAMATLGTTQTVRVPARSHFDLKSGTERVMRAQGVADLGSLGLEGKPELVRACAALLAYLAQTQKQELSHLAPFKPLNLGRHLIIDEVTERNLELFHRLDGRKGPGTLWHILDRTLTPMGGRLLEERMHHPWREASPIRETQQVVEWLFQDDVRREALRTALDLVYDLERLSTRIFLNRATPKDFIALRQSLSALPAVRATLERPANPEGTYPTDAETSGDTLPKPLSDMLSAWDDLADYADLLRRALTDNPPHLVTEGGLFRPGFDPDLDELLDLAEHGEARLQELLAEEQTVSGLPKLKLGYNRVFGYFFELSRAGADSVPEHFVRRQTLANAERFTTERLKELEEKLVSATDRRKTLEYRLFQSLRDTVAEARPRVLFMADMLAHLDFWQSLADVARRNGWVRPDVHTGHDIVIREGRHPVVEAMQGSASFVPNDLRMDEKRRLLLITGPNMAGKSTVLRQTAIICLLAQMGAFVPAREASIGIADRIFSRVGASDNLAQGQSTFMVEMMETARILRQASKRSLVILDEIGRGTSTFDGMALAWAVVEELTRRAGGGIRTLFATHYHEITSLEGRIPGVHNMNIAIREWNGDIVFLRRLVPGPADKSYGIEVARLAGVPHSVVQRARELLADLERTRDAARGTNSAPSRQTLPGLDLPSKQEQVDTIVAPPPCSGVEHPLLVALRDIDTDDMTPLEALKRITEWKQLWGTTREDRS.

The disordered stretch occupies residues 389 to 410; sequence ERPANPEGTYPTDAETSGDTLP. Residue 638 to 645 coordinates ATP; that stretch reads GPNMAGKS. Residues 826–847 are disordered; that stretch reads RDAARGTNSAPSRQTLPGLDLP. The segment covering 831-840 has biased composition (polar residues); it reads GTNSAPSRQT.

The protein belongs to the DNA mismatch repair MutS family.

This protein is involved in the repair of mismatches in DNA. It is possible that it carries out the mismatch recognition step. This protein has a weak ATPase activity. In Nitratidesulfovibrio vulgaris (strain ATCC 29579 / DSM 644 / CCUG 34227 / NCIMB 8303 / VKM B-1760 / Hildenborough) (Desulfovibrio vulgaris), this protein is DNA mismatch repair protein MutS.